The primary structure comprises 477 residues: Glycogen synthase (477 aa).

ADP-alpha-D-glucose is bound at residue Lys15.

The protein belongs to the glycosyltransferase 1 family. Bacterial/plant glycogen synthase subfamily.

The enzyme catalyses [(1-&gt;4)-alpha-D-glucosyl](n) + ADP-alpha-D-glucose = [(1-&gt;4)-alpha-D-glucosyl](n+1) + ADP + H(+). Its pathway is glycan biosynthesis; glycogen biosynthesis. Synthesizes alpha-1,4-glucan chains using ADP-glucose. This Salmonella typhimurium (strain LT2 / SGSC1412 / ATCC 700720) protein is Glycogen synthase (glgA).